The following is a 475-amino-acid chain: MAAPRMPPSRLSGIMVPAPIQDLEALRALTALFKEQRNRETAPRTIFQRVLDILKKSTHAVELACRDPSQVEHLASSLQLITECFRCLRNACIECSVNQNSIRNLDTIGVAVDLVLLFRELRVEQDSLLTAFRCGLQFLGNVASRNEESQSIVWVHAFPELFMSCLNHPDKKIVAYCSMILFTSLNAERMKDLEENLNIAINVIEAHQKHPASEWPFLIISDHFLKSPELVEAMYGKLSNQERITLLDIVIAKLVGEEQLTKDDISIFVRHAELIANSFMDQCRNVLKLTSEPHTEDKEALVTIRLLDVLCEMTSNTELLGYLQVFPGLMERVIDVLRVIHEVGKESTNIFSPSDSLKAEGDIEHMTEGFKSHLIRLIGNLCYKNKENQDKVNELDGIPLILDSSNIDDNNPFMMQWVVYAVRNLTEDNSQNQDVIAKMEEQGLADASLLKKMGFEIEKSGDKLILKSNNDIPPP.

Arg-10 is subject to Omega-N-methylarginine. 2 positions are modified to phosphoserine: Ser-12 and Ser-77. Position 82 is a phosphothreonine (Thr-82). At Ser-430 the chain carries Phosphoserine.

The protein belongs to the ataxin-10 family. Homooligomer. Interacts with GNB2. Interacts with IQCB1. Interacts with OGT. Interacts with PLK1. Polyubiquitinated. Post-translationally, phosphorylation at Ser-12 by AURKB promotes the association of ATXN10 with PLK1. Phosphorylation at Ser-77 and Thr-82 by PLK1 may play a role in the regulation of cytokinesis and may stimulate the proteasome-mediated degradation of ATXN10. As to expression, in high cell density areas; cerebellar cortex, dentate gyrus, hippocampus, anterior olfactory nucleus, primary olfactory cortex.

The protein localises to the cytoplasm. The protein resides in the perinuclear region. Its subcellular location is the midbody. It is found in the cytoskeleton. It localises to the cilium basal body. The protein localises to the microtubule organizing center. The protein resides in the centrosome. Its subcellular location is the centriole. Functionally, may play a role in the regulation of cytokinesis. May play a role in signaling by stimulating protein glycosylation. Induces neuritogenesis by activating the Ras-MAP kinase pathway and is necessary for the survival of cerebellar neurons. Does not appear to play a major role in ciliogenesis. In Mus musculus (Mouse), this protein is Ataxin-10 (Atxn10).